The chain runs to 72 residues: Large ribosomal subunit protein uL29 (72 aa).

The protein belongs to the universal ribosomal protein uL29 family.

This chain is Large ribosomal subunit protein uL29, found in Prochlorococcus marinus subsp. pastoris (strain CCMP1986 / NIES-2087 / MED4).